The following is a 482-amino-acid chain: Glycogen synthase 2 (482 aa).

Lys-18 serves as a coordination point for ADP-alpha-D-glucose.

It belongs to the glycosyltransferase 1 family. Bacterial/plant glycogen synthase subfamily.

It catalyses the reaction [(1-&gt;4)-alpha-D-glucosyl](n) + ADP-alpha-D-glucose = [(1-&gt;4)-alpha-D-glucosyl](n+1) + ADP + H(+). Its pathway is glycan biosynthesis; glycogen biosynthesis. Its function is as follows. Synthesizes alpha-1,4-glucan chains using ADP-glucose. The sequence is that of Glycogen synthase 2 from Bradyrhizobium diazoefficiens (strain JCM 10833 / BCRC 13528 / IAM 13628 / NBRC 14792 / USDA 110).